Reading from the N-terminus, the 542-residue chain is Probable myosin-binding protein 6 (542 aa).

The first 21 residues, 1–21 (MYIQLLCFFLFLFLLLQATMS), serve as a signal peptide directing secretion. Residues 39 to 59 (FLIYTVLEWSLIVFLFIDGVI) traverse the membrane as a helical segment. Residues 219 to 239 (SFLAPAPSPRVSHNKLSENES) are disordered. A GTD-binding domain is found at 300 to 398 (SILNQLKKEV…ELEAEFEVYR (99 aa)). The tract at residues 419-480 (GNASAYDDCQ…DEEKGSESKE (62 aa)) is disordered. The span at 437–456 (AVSSSNQQENGENIDQNGQS) shows a compositional bias: polar residues. Residues 471–480 (DEEKGSESKE) show a composition bias toward basic and acidic residues.

It localises to the membrane. Its function is as follows. Probable membrane-anchored myosin receptors. This chain is Probable myosin-binding protein 6, found in Arabidopsis thaliana (Mouse-ear cress).